A 429-amino-acid polypeptide reads, in one-letter code: 3-phosphoshikimate 1-carboxyvinyltransferase (429 aa).

Residues K21, S22, and R26 each coordinate 3-phosphoshikimate. K21 is a binding site for phosphoenolpyruvate. Residues G94 and R122 each coordinate phosphoenolpyruvate. 3-phosphoshikimate-binding residues include S167, Q169, D315, and K342. Q169 provides a ligand contact to phosphoenolpyruvate. The Proton acceptor role is filled by D315. Residues R346 and R388 each contribute to the phosphoenolpyruvate site.

Belongs to the EPSP synthase family. Monomer.

It localises to the cytoplasm. It carries out the reaction 3-phosphoshikimate + phosphoenolpyruvate = 5-O-(1-carboxyvinyl)-3-phosphoshikimate + phosphate. The protein operates within metabolic intermediate biosynthesis; chorismate biosynthesis; chorismate from D-erythrose 4-phosphate and phosphoenolpyruvate: step 6/7. Functionally, catalyzes the transfer of the enolpyruvyl moiety of phosphoenolpyruvate (PEP) to the 5-hydroxyl of shikimate-3-phosphate (S3P) to produce enolpyruvyl shikimate-3-phosphate and inorganic phosphate. The chain is 3-phosphoshikimate 1-carboxyvinyltransferase from Desulforudis audaxviator (strain MP104C).